Consider the following 105-residue polypeptide: Thioredoxin (105 aa).

The 105-residue stretch at 1-105 (MANNVTDSSF…SLLDWINKSI (105 aa)) folds into the Thioredoxin domain. An intrachain disulfide couples Cys30 to Cys33.

It belongs to the thioredoxin family.

Component of the thioredoxin-thioredoxin reductase system. Participates in various redox reactions through the reversible oxidation of its active center dithiol to a disulfide and catalyzes dithiol-disulfide exchange reactions. The sequence is that of Thioredoxin (trxA) from Rickettsia felis (strain ATCC VR-1525 / URRWXCal2) (Rickettsia azadi).